Here is a 1483-residue protein sequence, read N- to C-terminus: Heme-responsive zinc finger transcription factor HAP1 (1483 aa).

Residues 1-50 (MSNTPYNSSVPSIASMTQSSVSRSPNMHTATTPGANTSSNSPPLHMSSDS) show a composition bias toward polar residues. The disordered stretch occupies residues 1-56 (MSNTPYNSSVPSIASMTQSSVSRSPNMHTATTPGANTSSNSPPLHMSSDSSKIKRK). Residues Cys-64, Cys-67, Cys-74, Cys-81, Cys-84, and Cys-93 each contribute to the Zn(2+) site. Positions 64 to 93 (CTICRKRKVKCDKLRPHCQQCTKTGVAHLC) form a DNA-binding region, zn(2)-C6 fungal-type. Positions 105 to 134 (EKELLKDNELKKLRERVKSLEKTLSKVHSS) form a coiled coil. The interval 126–208 (KTLSKVHSSP…ANSSSLSISN (83 aa)) is disordered. Low complexity predominate over residues 130–142 (KVHSSPSSNSLKS). Polar residues-rich tracts occupy residues 143-152 (YNTPESSNLF) and 160-176 (TLVNANTGSASSASHMH). Low complexity predominate over residues 177–208 (QQQQQQQQQEQQQDFSRSANANANSSSLSISN). The segment at 244–444 (KGDPYLKLLW…NTIPHHQPQS (201 aa)) is heme-responsive; required for HMC formation. HRM repeat units follow at residues 280-285 (KCPINH), 299-304 (KCPVDH), 323-328 (KCPVDH), 347-352 (RCPVDH), 389-394 (KCPVDH), and 415-420 (RCPIDH). Polar residues-rich tracts occupy residues 432-447 (STHNTIPHHQPQSGSH) and 706-734 (QLNATIPATSQDVSNNGSKKANPSTNPTL). Disordered regions lie at residues 432-458 (STHNTIPHHQPQSGSHARSHPAQSRKH) and 706-767 (QLNA…KENQ). Residues 735 to 759 (NNNMSAATTNSSSRSGSADSRSGSN) show a composition bias toward low complexity. An HRM 7 repeat occupies 1192–1197 (KCPVYQ). The segment at 1384-1411 (TANTDTSANGSALSTLTSPQGSDLASNS) is disordered. The span at 1388 to 1411 (DTSANGSALSTLTSPQGSDLASNS) shows a compositional bias: polar residues.

Binds DNA as a homodimer. Interacts with SRO9 and YDJ1. In the absence of heme, binds to at least four cellular proteins, including YDJ1 and SRO9, forming a high-molecular-weight complex (HMC) which results in repression of its activity and dictates its DNA-binding specificity.

The protein localises to the nucleus. Its function is as follows. Regulation of oxygen dependent gene expression. It modulates the expression of Iso-1 (CYP1) and Iso-2 (CYP3) cytochrome c. In response to heme, promotes transcription of genes encoding functions required for respiration, controlling oxidative damage and repression of anaerobic genes. Binds to the sequence 5'-CGGNNNTNNCGG-3'. Is non-functional in terms of iso-1 cytochrome c expression in strain S288c and its derivatives. The chain is Heme-responsive zinc finger transcription factor HAP1 (HAP1) from Saccharomyces cerevisiae (Baker's yeast).